The chain runs to 196 residues: ATP-dependent Clp protease proteolytic subunit (196 aa).

The Nucleophile role is filled by S101. Residue H126 is part of the active site.

This sequence belongs to the peptidase S14 family. As to quaternary structure, component of the chloroplastic Clp protease core complex.

Its subcellular location is the plastid. The protein localises to the chloroplast stroma. It carries out the reaction Hydrolysis of proteins to small peptides in the presence of ATP and magnesium. alpha-casein is the usual test substrate. In the absence of ATP, only oligopeptides shorter than five residues are hydrolyzed (such as succinyl-Leu-Tyr-|-NHMec, and Leu-Tyr-Leu-|-Tyr-Trp, in which cleavage of the -Tyr-|-Leu- and -Tyr-|-Trp bonds also occurs).. Functionally, cleaves peptides in various proteins in a process that requires ATP hydrolysis. Has a chymotrypsin-like activity. Plays a major role in the degradation of misfolded proteins. The polypeptide is ATP-dependent Clp protease proteolytic subunit (Lactuca sativa (Garden lettuce)).